The following is a 1261-amino-acid chain: Structural maintenance of chromosomes protein 3 (1261 aa).

Coiled-coil stretches lie at residues 188-332 (EKIQ…HSLQ) and 406-450 (LIAD…YEMD). In terms of domain architecture, SMC hinge spans 534 to 645 (NGYYGTVIEL…IIVRTLDQAA (112 aa)). 3 coiled-coil regions span residues 677 to 826 (KRSK…MDLM), 857 to 930 (NERR…DKIT), and 1023 to 1085 (RELE…ENRK). Positions 1159 to 1193 (LSGGQKSLVALAIIFSIQKCDPAPFYLFDEIDAAL) match the DA-box motif.

The protein belongs to the SMC family. SMC3 subfamily. As to quaternary structure, component of the cohesin complex, composed of the smc-1 and smc-3 heterodimer attached via their SMC hinge domain, scc-1 which links them, and scc-3. Interacts with scc-1, smc-1 and tim-1.

The protein localises to the nucleus. It is found in the chromosome. Its function is as follows. Involved in chromosome cohesion during cell cycle and in DNA repair. Involved in the repair of double strand breaks during mitosis and meiosis. Required for chromosome segregation during mitosis. Central component of cohesin complex. The cohesin complex is required for the cohesion of sister chromatids after DNA replication. The cohesin complex apparently forms a large proteinaceous ring within which sister chromatids can be trapped. At anaphase, the complex is cleaved and dissociates from chromatin, allowing sister chromatids to segregate. Required for the localization of lab-1 to meiotic and mitotic chromosomes. The chain is Structural maintenance of chromosomes protein 3 from Caenorhabditis elegans.